Reading from the N-terminus, the 92-residue chain is Trp operon repressor homolog (92 aa).

Residues 56–79 (QREVASKLGVSITKITRGAANLQD) mediate DNA binding.

This sequence belongs to the TrpR family. In terms of assembly, homodimer.

Its subcellular location is the cytoplasm. Its function is as follows. This protein is an aporepressor. When complexed with L-tryptophan it binds the operator region of the trp operon and prevents the initiation of transcription. This is Trp operon repressor homolog from Xylella fastidiosa (strain M23).